The sequence spans 207 residues: Small ribosomal subunit protein uS4 (207 aa).

Positions 31–51 (KCKLDSKPGQHGRTSGARTSD) are disordered. The S4 RNA-binding domain occupies 97–160 (SRLDNVVYRM…KKQARIRESL (64 aa)).

It belongs to the universal ribosomal protein uS4 family. Part of the 30S ribosomal subunit. Contacts protein S5. The interaction surface between S4 and S5 is involved in control of translational fidelity.

In terms of biological role, one of the primary rRNA binding proteins, it binds directly to 16S rRNA where it nucleates assembly of the body of the 30S subunit. Its function is as follows. With S5 and S12 plays an important role in translational accuracy. This chain is Small ribosomal subunit protein uS4, found in Bordetella avium (strain 197N).